A 247-amino-acid polypeptide reads, in one-letter code: 5'-nucleotidase SurE (247 aa).

The a divalent metal cation site is built by aspartate 8, aspartate 9, serine 39, and asparagine 91.

It belongs to the SurE nucleotidase family. Requires a divalent metal cation as cofactor.

The protein resides in the cytoplasm. The catalysed reaction is a ribonucleoside 5'-phosphate + H2O = a ribonucleoside + phosphate. Functionally, nucleotidase that shows phosphatase activity on nucleoside 5'-monophosphates. This chain is 5'-nucleotidase SurE, found in Nitrosomonas eutropha (strain DSM 101675 / C91 / Nm57).